The primary structure comprises 114 residues: UPF0757 protein YmgG (114 aa).

This sequence belongs to the UPF0757 family.

The protein is UPF0757 protein YmgG of Shigella flexneri.